Here is a 305-residue protein sequence, read N- to C-terminus: Putative ankyrin repeat protein RF_0580 (305 aa).

7 ANK repeats span residues 5–34 (YNKNNLFAKLAYGDLSEVQALLKSGVNIDE), 39–68 (RGETALYNTLFTGYMDRAAFLLKHKASPNI), 72–101 (SGQTILYLLVMNNSIDKMKFLFENTTNIDL), 107–136 (CGHSPLHAATFNENIEAMELLLKKGADINS), 140–169 (FGASALHGTIYNNKLKAAELLLNHGADVNA), 173–202 (YEDTILHNIIGTNNIEAAKFLLQNGADVNI), and 206–235 (NNFTPLDRAILGQHKELAELFLKSGATIKI).

The sequence is that of Putative ankyrin repeat protein RF_0580 from Rickettsia felis (strain ATCC VR-1525 / URRWXCal2) (Rickettsia azadi).